The sequence spans 350 residues: Ion-translocating oxidoreductase complex subunit D (350 aa).

The next 3 membrane-spanning stretches (helical) occupy residues cysteine 36 to alanine 56, isoleucine 89 to valine 109, and alanine 124 to alanine 144. Threonine 185 is subject to FMN phosphoryl threonine. The next 5 helical transmembrane spans lie at glycine 212–leucine 232, tryptophan 239–leucine 259, methionine 265–threonine 285, leucine 298–proline 318, and aspartate 319–valine 339.

The protein belongs to the NqrB/RnfD family. The complex is composed of six subunits: RnfA, RnfB, RnfC, RnfD, RnfE and RnfG. FMN serves as cofactor.

It localises to the cell inner membrane. Its function is as follows. Part of a membrane-bound complex that couples electron transfer with translocation of ions across the membrane. This is Ion-translocating oxidoreductase complex subunit D from Shewanella loihica (strain ATCC BAA-1088 / PV-4).